The following is a 396-amino-acid chain: Mannonate dehydratase (396 aa).

This sequence belongs to the mannonate dehydratase family. Fe(2+) serves as cofactor. Mn(2+) is required as a cofactor.

The catalysed reaction is D-mannonate = 2-dehydro-3-deoxy-D-gluconate + H2O. It participates in carbohydrate metabolism; pentose and glucuronate interconversion. Functionally, catalyzes the dehydration of D-mannonate. This chain is Mannonate dehydratase, found in Yersinia enterocolitica serotype O:8 / biotype 1B (strain NCTC 13174 / 8081).